The following is a 149-amino-acid chain: Protein DOWN-REGULATED IN DIF1 11 (149 aa).

The first 22 residues, 1–22 (MEKAILITFLIATTSMVYQTIG), serve as a signal peptide directing secretion.

As to expression, mostly expressed in embryo sac cells. Restricted to synergid cells, especially in the filiform apparatus of mature female gametophyte, via MYB98-mediated transcription regulation. Also detected at low levels in egg and central cells.

This is Protein DOWN-REGULATED IN DIF1 11 from Arabidopsis thaliana (Mouse-ear cress).